Reading from the N-terminus, the 432-residue chain is Glutamate-1-semialdehyde 2,1-aminomutase (432 aa).

Position 271 is an N6-(pyridoxal phosphate)lysine (K271).

It belongs to the class-III pyridoxal-phosphate-dependent aminotransferase family. HemL subfamily. As to quaternary structure, homodimer. Pyridoxal 5'-phosphate serves as cofactor.

Its subcellular location is the cytoplasm. The enzyme catalyses (S)-4-amino-5-oxopentanoate = 5-aminolevulinate. It functions in the pathway porphyrin-containing compound metabolism; protoporphyrin-IX biosynthesis; 5-aminolevulinate from L-glutamyl-tRNA(Glu): step 2/2. This is Glutamate-1-semialdehyde 2,1-aminomutase from Protochlamydia amoebophila (strain UWE25).